Consider the following 720-residue polypeptide: Pollen receptor-like kinase 1 (720 aa).

The LRR 1; degenerate repeat unit spans residues 40–64 (LCSRGHLLIIFLLLVSPFNDAAVDV). An LRR 2; degenerate repeat occupies 123–146 (LGVLCYEGDVWGLQLENLDLSGVI). LRR repeat units follow at residues 154 to 179 (LHFLRTLSFMNNSFKGQCLIGISLEP), 226 to 248 (LPQVFELSLENNRFTGSIPHFPP), and 249 to 273 (NVLKVLNLSNNQLEGPIPPALSLMD). The segment at 288–319 (LESACNSPSQEANNPDSRNSSTISGQSSTDVI) is disordered. Residues 291 to 317 (ACNSPSQEANNPDSRNSSTISGQSSTD) are compositionally biased toward polar residues. A helical membrane pass occupies residues 330 to 350 (MLIVAVCLVVLCLLIVLILII). 2 stretches are compositionally biased toward polar residues: residues 356-382 (SSSQNPQPVESNYSNNDRDQNAFTSSA) and 389-405 (LSGNSTYSNNQHSNSNK). Residues 356-409 (SSSQNPQPVESNYSNNDRDQNAFTSSAPDDHVTLSGNSTYSNNQHSNSNKAEAP) are disordered. Residues 434–702 (RASAEVLGSG…KEVVQSIQSL (269 aa)) enclose the Protein kinase domain. ATP contacts are provided by residues 440-448 (LGSGNLGSS) and lysine 462.

The protein belongs to the protein kinase superfamily. Interacts with KIP1. Autophosphorylated. Expressed in mature pollen grains and pollen tubes, but not in style, petal, leaf, root or sepal. Very low expression in the ovary.

It localises to the microsome membrane. It is found in the cytoplasm. It catalyses the reaction L-seryl-[protein] + ATP = O-phospho-L-seryl-[protein] + ADP + H(+). The catalysed reaction is L-threonyl-[protein] + ATP = O-phospho-L-threonyl-[protein] + ADP + H(+). The enzyme catalyses L-tyrosyl-[protein] + ATP = O-phospho-L-tyrosyl-[protein] + ADP + H(+). Dual-specificity kinase with both serine/threonine and tyrosine kinase activities. Required for postmeiotic development of microspores. Involved in embryo sac development at the late stages of megagametogenesis. Involved in the phosphorylation of KIP1. The chain is Pollen receptor-like kinase 1 from Petunia integrifolia (Violet-flowered petunia).